Here is a 191-residue protein sequence, read N- to C-terminus: Adenylate kinase (191 aa).

10-15 is an ATP binding site; the sequence is GAGKGT. The segment at 30 to 59 is NMP; that stretch reads STGDIFRANVTEGTPLGVEAKRYMDAGEYV. AMP-binding positions include T31, R36, 57 to 59, 85 to 88, and Q92; these read EYV and GYPR. The tract at residues 126-136 is LID; it reads QRAQVEGRADD. An ATP-binding site is contributed by R127. R133 and R144 together coordinate AMP. G172 contributes to the ATP binding site.

Belongs to the adenylate kinase family. In terms of assembly, monomer.

Its subcellular location is the cytoplasm. It catalyses the reaction AMP + ATP = 2 ADP. Its pathway is purine metabolism; AMP biosynthesis via salvage pathway; AMP from ADP: step 1/1. Its function is as follows. Catalyzes the reversible transfer of the terminal phosphate group between ATP and AMP. Plays an important role in cellular energy homeostasis and in adenine nucleotide metabolism. The chain is Adenylate kinase from Nocardioides sp. (strain ATCC BAA-499 / JS614).